The sequence spans 213 residues: NADH-quinone oxidoreductase subunit B 1 (213 aa).

Positions 82, 83, 148, and 177 each coordinate [4Fe-4S] cluster.

The protein belongs to the complex I 20 kDa subunit family. In terms of assembly, NDH-1 is composed of 14 different subunits. Subunits NuoB, C, D, E, F, and G constitute the peripheral sector of the complex. Requires [4Fe-4S] cluster as cofactor.

The protein localises to the cell inner membrane. It carries out the reaction a quinone + NADH + 5 H(+)(in) = a quinol + NAD(+) + 4 H(+)(out). NDH-1 shuttles electrons from NADH, via FMN and iron-sulfur (Fe-S) centers, to quinones in the respiratory chain. The immediate electron acceptor for the enzyme in this species is believed to be ubiquinone. Couples the redox reaction to proton translocation (for every two electrons transferred, four hydrogen ions are translocated across the cytoplasmic membrane), and thus conserves the redox energy in a proton gradient. The polypeptide is NADH-quinone oxidoreductase subunit B 1 (Koribacter versatilis (strain Ellin345)).